A 348-amino-acid polypeptide reads, in one-letter code: Glycerol-1-phosphate dehydrogenase [NAD(P)+] (348 aa).

Residues 94-98 (GKVID) and 116-119 (TTAS) contribute to the NAD(+) site. Asp-121 is a substrate binding site. Ser-125 lines the NAD(+) pocket. Asp-168 is a substrate binding site. Positions 168 and 248 each coordinate Zn(2+). His-252 contributes to the substrate binding site. His-264 is a binding site for Zn(2+).

It belongs to the glycerol-1-phosphate dehydrogenase family. In terms of assembly, homooctamer. Requires Zn(2+) as cofactor.

The protein localises to the cytoplasm. It catalyses the reaction sn-glycerol 1-phosphate + NAD(+) = dihydroxyacetone phosphate + NADH + H(+). The enzyme catalyses sn-glycerol 1-phosphate + NADP(+) = dihydroxyacetone phosphate + NADPH + H(+). Its pathway is membrane lipid metabolism; glycerophospholipid metabolism. Its function is as follows. Catalyzes the NAD(P)H-dependent reduction of dihydroxyacetonephosphate (DHAP or glycerone phosphate) to glycerol 1-phosphate (G1P). The G1P thus generated is used as the glycerophosphate backbone of phospholipids in the cellular membranes of Archaea. This is Glycerol-1-phosphate dehydrogenase [NAD(P)+] from Methanobrevibacter smithii (strain ATCC 35061 / DSM 861 / OCM 144 / PS).